A 355-amino-acid chain; its full sequence is Probable low-specificity L-threonine aldolase 2 (355 aa).

Lysine 211 is subject to N6-(pyridoxal phosphate)lysine.

The protein belongs to the threonine aldolase family. Pyridoxal 5'-phosphate is required as a cofactor. As to expression, expressed in roots, leaf vasculature and flowers.

The enzyme catalyses L-threonine = acetaldehyde + glycine. The catalysed reaction is L-allo-threonine = acetaldehyde + glycine. Its pathway is amino-acid degradation; L-threonine degradation via aldolase pathway; acetaldehyde and glycine from L-threonine: step 1/1. In terms of biological role, threonine aldolase involved in threonine degradation to glycine. May play a role in the removal of L-allo-threonine. The sequence is that of Probable low-specificity L-threonine aldolase 2 (THA2) from Arabidopsis thaliana (Mouse-ear cress).